The following is a 332-amino-acid chain: Putative threonine dehydratase (332 aa).

Residue K56 is modified to N6-(pyridoxal phosphate)lysine.

This sequence belongs to the serine/threonine dehydratase family. It depends on pyridoxal 5'-phosphate as a cofactor.

The catalysed reaction is L-threonine = 2-oxobutanoate + NH4(+). The protein operates within amino-acid biosynthesis; L-isoleucine biosynthesis; 2-oxobutanoate from L-threonine: step 1/1. The protein is Putative threonine dehydratase of Sinorhizobium fredii (strain NBRC 101917 / NGR234).